Consider the following 160-residue polypeptide: Small ribosomal subunit protein bS6 (160 aa).

Composition is skewed to basic and acidic residues over residues 94 to 119 and 125 to 152; these read EEHE…RGGR and RGDR…REDA. Positions 94–160 are disordered; that stretch reads EEHEEGPSAM…DADTAAASEE (67 aa).

This sequence belongs to the bacterial ribosomal protein bS6 family.

In terms of biological role, binds together with bS18 to 16S ribosomal RNA. This chain is Small ribosomal subunit protein bS6, found in Rhodopseudomonas palustris (strain BisB5).